Here is a 322-residue protein sequence, read N- to C-terminus: Solute carrier family 35 member B1 (322 aa).

8 helical membrane-spanning segments follow: residues 12 to 32 (LRLP…GILQ), 51 to 71 (FALT…KILI), 85 to 105 (WLYA…NSAL), 136 to 156 (YPMA…LFMY), 168 to 188 (TIGY…LTGV), 210 to 230 (LWST…WEFL), 243 to 263 (ILLF…TVVY), and 285 to 305 (VILF…LVFL). The Di-lysine motif signature appears at 318–322 (KKTSH).

This sequence belongs to the nucleotide-sugar transporter family. SLC35B subfamily.

The protein localises to the endoplasmic reticulum membrane. It catalyses the reaction ADP(in) + ATP(out) = ADP(out) + ATP(in). The catalysed reaction is UDP(out) + ATP(in) = UDP(in) + ATP(out). The enzyme catalyses UTP(out) + ATP(in) = UTP(in) + ATP(out). It carries out the reaction dATP(out) + ATP(in) = dATP(in) + ATP(out). In terms of biological role, ATP:ADP antiporter that catalyzes the exchange of ATP and ADP across the endoplasmic reticulum (ER) membrane. Imports ATP from the cytosol to the ER lumen and exports ADP in the opposite direction. Regulates ER energy metabolism and protein biogenesis. Appears to be part of a calcium-dependent ER to cytosol low energy response axis, where calcium efflux from ER to the cytosol triggers ATP import into the ER lumen to maintain sufficient ATP supply. Provides ATP to ER chaperone HSPA5 that drives protein folding and trafficking in the ER. Can transport dATP, UTP or UDP in exchange for ATP, but the physiological relevance of this process remains to be established. This is Solute carrier family 35 member B1 (SLC35B1) from Bos taurus (Bovine).